A 165-amino-acid chain; its full sequence is Transcriptional repressor NrdR (165 aa).

Residues 3 to 34 fold into a zinc finger; sequence CPFCRHPDSRVVDSREADEGQAIRRRRSCPEC. The 91-residue stretch at 46–136 folds into the ATP-cone domain; it reads LSVVKRSGVT…VYKSFSSAAD (91 aa).

This sequence belongs to the NrdR family. Zn(2+) serves as cofactor.

Its function is as follows. Negatively regulates transcription of bacterial ribonucleotide reductase nrd genes and operons by binding to NrdR-boxes. The chain is Transcriptional repressor NrdR from Rhodococcus erythropolis (strain PR4 / NBRC 100887).